We begin with the raw amino-acid sequence, 109 residues long: MFGKGGMGNLMKQAQQMQERMQKLQEEIANMEVTGESGAGLVKVTVTGSHSVRRVNIDESLMEDDKEMLEDLIAAAFNDAARRIEETQKEKMASITGGMQLPPGMKMPF.

Residues 1-22 are disordered; sequence MFGKGGMGNLMKQAQQMQERMQ.

This sequence belongs to the YbaB/EbfC family. As to quaternary structure, homodimer.

The protein localises to the cytoplasm. It is found in the nucleoid. Its function is as follows. Binds to DNA and alters its conformation. May be involved in regulation of gene expression, nucleoid organization and DNA protection. The protein is Nucleoid-associated protein VC_1055 of Vibrio cholerae serotype O1 (strain ATCC 39315 / El Tor Inaba N16961).